Reading from the N-terminus, the 921-residue chain is DNA ligase (921 aa).

NAD(+)-binding positions include 90-94 (DAAYD), 139-140 (SL), and glutamate 173. The N6-AMP-lysine intermediate role is filled by lysine 175. Residues arginine 196, glutamate 235, lysine 360, and lysine 384 each coordinate NAD(+). Zn(2+) is bound by residues cysteine 481, cysteine 484, cysteine 500, and cysteine 506. Positions 663 to 688 (EAAIESAETQGGAASETTGAPTGAEA) are disordered. A BRCT domain is found at 839 to 921 (SLPQTLAGKT…AQLLETGSID (83 aa)).

The protein belongs to the NAD-dependent DNA ligase family. LigA subfamily. It depends on Mg(2+) as a cofactor. Mn(2+) is required as a cofactor.

It carries out the reaction NAD(+) + (deoxyribonucleotide)n-3'-hydroxyl + 5'-phospho-(deoxyribonucleotide)m = (deoxyribonucleotide)n+m + AMP + beta-nicotinamide D-nucleotide.. Its function is as follows. DNA ligase that catalyzes the formation of phosphodiester linkages between 5'-phosphoryl and 3'-hydroxyl groups in double-stranded DNA using NAD as a coenzyme and as the energy source for the reaction. It is essential for DNA replication and repair of damaged DNA. The sequence is that of DNA ligase from Bifidobacterium longum subsp. infantis (strain ATCC 15697 / DSM 20088 / JCM 1222 / NCTC 11817 / S12).